Consider the following 190-residue polypeptide: Putative manganese efflux pump MntP (190 aa).

A run of 6 helical transmembrane segments spans residues 3 to 23 (PASI…AAVG), 39 to 59 (IGLI…FIGQ), 65 to 85 (VANW…LHMI), 106 to 128 (WLLA…GLAF), 133 to 155 (IWVA…VMLG), and 157 to 177 (AIGT…LIIV).

This sequence belongs to the MntP (TC 9.B.29) family.

It localises to the cell inner membrane. Probably functions as a manganese efflux pump. The sequence is that of Putative manganese efflux pump MntP from Pseudomonas fluorescens (strain ATCC BAA-477 / NRRL B-23932 / Pf-5).